The following is a 311-amino-acid chain: Mitochondrial arginine transporter BAC1 (311 aa).

Solcar repeat units lie at residues 12-101, 111-203, and 219-305; these read FGFY…AKLF, PRPE…LRYH, and VDMG…SMKM. 6 consecutive transmembrane segments (helical) span residues 18–38, 76–96, 113–133, 178–197, 222–242, and 288–308; these read YVAG…FDTV, GATS…GIYS, PEII…VLCP, GGSA…FTVY, GIGV…VLPF, and AFPA…MLGI.

It belongs to the mitochondrial carrier (TC 2.A.29) family. As to expression, high expression in flowers and siliques. Lower expression in leaves and stems.

The protein localises to the mitochondrion inner membrane. Inhibited by mercuric chloride. Functionally, mitochondrial arginine transporter that catalyzes the counter-exchange of arginine with lysine, ornithine, arginine and histidine. Substrate preference in reconstituted proteoliposomes is arginine &gt; lysine &gt; ornithine &gt; histidine. May be involved in the delivery of arginine, released from seed reserves, to mitochondrial arginase and the export of ornithine. This is Mitochondrial arginine transporter BAC1 (BAC1) from Arabidopsis thaliana (Mouse-ear cress).